We begin with the raw amino-acid sequence, 31 residues long: Photosystem II reaction center protein M (31 aa).

The helical transmembrane segment at 5–25 (ILAFIATALLILVPTAFLLII) threads the bilayer.

This sequence belongs to the PsbM family. As to quaternary structure, PSII is composed of 1 copy each of membrane proteins PsbA, PsbB, PsbC, PsbD, PsbE, PsbF, PsbH, PsbI, PsbJ, PsbK, PsbL, PsbM, PsbT, PsbX, PsbY, PsbZ, Psb30/Ycf12, at least 3 peripheral proteins of the oxygen-evolving complex and a large number of cofactors. It forms dimeric complexes.

The protein resides in the plastid membrane. One of the components of the core complex of photosystem II (PSII). PSII is a light-driven water:plastoquinone oxidoreductase that uses light energy to abstract electrons from H(2)O, generating O(2) and a proton gradient subsequently used for ATP formation. It consists of a core antenna complex that captures photons, and an electron transfer chain that converts photonic excitation into a charge separation. This subunit is found at the monomer-monomer interface. This chain is Photosystem II reaction center protein M, found in Cuscuta reflexa (Southern Asian dodder).